Here is a 311-residue protein sequence, read N- to C-terminus: tRNA dimethylallyltransferase (311 aa).

12–19 is a binding site for ATP; sequence GPTASGKT. Residue 14 to 19 coordinates substrate; it reads TASGKT. 3 interaction with substrate tRNA regions span residues 37–40, 161–165, and 241–246; these read DSAL, QRINR, and RCVGYR.

The protein belongs to the IPP transferase family. In terms of assembly, monomer. The cofactor is Mg(2+).

The enzyme catalyses adenosine(37) in tRNA + dimethylallyl diphosphate = N(6)-dimethylallyladenosine(37) in tRNA + diphosphate. Functionally, catalyzes the transfer of a dimethylallyl group onto the adenine at position 37 in tRNAs that read codons beginning with uridine, leading to the formation of N6-(dimethylallyl)adenosine (i(6)A). The protein is tRNA dimethylallyltransferase of Histophilus somni (strain 129Pt) (Haemophilus somnus).